Consider the following 257-residue polypeptide: Hydroxyacylglutathione hydrolase (257 aa).

His54, His56, Asp58, His59, His113, Asp137, and His175 together coordinate Zn(2+).

This sequence belongs to the metallo-beta-lactamase superfamily. Glyoxalase II family. In terms of assembly, monomer. Zn(2+) is required as a cofactor.

The enzyme catalyses an S-(2-hydroxyacyl)glutathione + H2O = a 2-hydroxy carboxylate + glutathione + H(+). It functions in the pathway secondary metabolite metabolism; methylglyoxal degradation; (R)-lactate from methylglyoxal: step 2/2. Functionally, thiolesterase that catalyzes the hydrolysis of S-D-lactoyl-glutathione to form glutathione and D-lactic acid. In Nostoc sp. (strain PCC 7120 / SAG 25.82 / UTEX 2576), this protein is Hydroxyacylglutathione hydrolase.